The following is a 290-amino-acid chain: Expansin-A26 (290 aa).

The first 29 residues, 1 to 29, serve as a signal peptide directing secretion; that stretch reads MDTTTTMAPLPLLTTTSLLLFFFLASSFA. The segment at 45-67 is disordered; that stretch reads DGGGDGEGGGGGDGEGGGGGGGA. One can recognise an Expansin-like EG45 domain in the interval 101 to 196; the sequence is GGACGYKDAD…RKVACVRQGG (96 aa). Residues 206–286 enclose the Expansin-like CBD domain; the sequence is SYNMVMVKNV…DWTYDNTYQA (81 aa). An N-linked (GlcNAc...) asparagine glycan is attached at asparagine 250.

This sequence belongs to the expansin family. Expansin A subfamily. Expressed in flowers.

Its subcellular location is the secreted. The protein resides in the cell wall. It localises to the membrane. May cause loosening and extension of plant cell walls by disrupting non-covalent bonding between cellulose microfibrils and matrix glucans. No enzymatic activity has been found. May be required for rapid internodal elongation in deepwater rice during submergence. In Oryza sativa subsp. japonica (Rice), this protein is Expansin-A26 (EXPA26).